The sequence spans 269 residues: Regulatory protein RecX (269 aa).

This sequence belongs to the RecX family.

The protein resides in the cytoplasm. In terms of biological role, modulates RecA activity. In Geobacillus kaustophilus (strain HTA426), this protein is Regulatory protein RecX.